The sequence spans 2080 residues: Fatty acid synthase beta subunit TOXC (2080 aa).

The 228-residue stretch at 170–397 (GRYFDELREL…LYRFNLLLRK (228 aa)) folds into the Starter acyltransferase (SAT) domain. Catalysis depends on S276, which acts as the For acetyltransferase activity. The tract at residues 585–830 (SRLLGLPPIM…VIVETEGLND (246 aa)) is enoyl reductase (ER) domain. The segment at 1155–1644 (GKSRSWRHAI…LPNQKLEVKL (490 aa)) is dehydratase (DH) domain. In terms of domain architecture, MaoC-like spans 1544-1662 (SVDFEDPVSV…MIRLHIEARA (119 aa)). Positions 1682 to 2046 (TYVFTGQGSQ…FQYVYDLTGS (365 aa)) constitute a Malonyl-CoA:ACP transacylase (MAT) domain. The segment at 1683 to 2046 (YVFTGQGSQE…FQYVYDLTGS (364 aa)) is malonyl/palmitoyl transferase (MT/PT) domain. The active-site For malonyltransferase activity is the S1828.

Belongs to the fungal fatty acid synthetase subunit beta family.

It carries out the reaction acetyl-CoA + n malonyl-CoA + 2n NADPH + 4n H(+) = a long-chain-acyl-CoA + n CoA + n CO2 + 2n NADP(+).. It catalyses the reaction holo-[ACP] + acetyl-CoA = acetyl-[ACP] + CoA. The enzyme catalyses holo-[ACP] + malonyl-CoA = malonyl-[ACP] + CoA. The catalysed reaction is a (3R)-hydroxyacyl-[ACP] = a (2E)-enoyl-[ACP] + H2O. It carries out the reaction a 2,3-saturated acyl-[ACP] + NAD(+) = a (2E)-enoyl-[ACP] + NADH + H(+). It catalyses the reaction (9Z)-octadecenoyl-[ACP] + H2O = (9Z)-octadecenoate + holo-[ACP] + H(+). It participates in mycotoxin biosynthesis; HC-toxin biosynthesis. Functionally, fatty acid synthase beta subunit, part of the diffuse TOX2 gene cluster that mediates the biosynthesis of the HC-toxin, cyclic tetrapeptide of structure cyclo(D-Pro-L-Ala-D-Ala-L-Aeo), where Aeo stands for 2-amino-9,10-epoxi-8-oxodecanoic acid. HC-toxin is a determinant of specificity and virulence in the interaction between the producing fungus and its host, maize. TOXC contribute to the synthesis of the decanoic backbone of 2-amino-9,10-epoxi-8-oxodecanoic acid, an essential precursor for the production of the major forms of HC-toxin by the non-ribosomal peptide synthetase HTS1. The protein is Fatty acid synthase beta subunit TOXC of Cochliobolus carbonum (Maize leaf spot fungus).